Reading from the N-terminus, the 131-residue chain is D-ribose pyranase (131 aa).

Catalysis depends on His-20, which acts as the Proton donor. Residues Asp-28, His-98, and 120 to 122 (YAN) each bind substrate.

Belongs to the RbsD / FucU family. RbsD subfamily. As to quaternary structure, homodecamer.

It localises to the cytoplasm. It carries out the reaction beta-D-ribopyranose = beta-D-ribofuranose. Its pathway is carbohydrate metabolism; D-ribose degradation; D-ribose 5-phosphate from beta-D-ribopyranose: step 1/2. Catalyzes the interconversion of beta-pyran and beta-furan forms of D-ribose. The protein is D-ribose pyranase of Bacillus licheniformis (strain ATCC 14580 / DSM 13 / JCM 2505 / CCUG 7422 / NBRC 12200 / NCIMB 9375 / NCTC 10341 / NRRL NRS-1264 / Gibson 46).